The chain runs to 466 residues: Histidine--tRNA ligase (466 aa).

It belongs to the class-II aminoacyl-tRNA synthetase family. In terms of assembly, homodimer.

It localises to the cytoplasm. It catalyses the reaction tRNA(His) + L-histidine + ATP = L-histidyl-tRNA(His) + AMP + diphosphate + H(+). The chain is Histidine--tRNA ligase (hisS) from Bifidobacterium longum (strain NCC 2705).